Here is a 92-residue protein sequence, read N- to C-terminus: Calitoxin (92 aa).

An N-terminal signal peptide occupies residues 1–20 (MKTQVLVVLVLCVVFCLAES). Residues 21–42 (RNSMTSEERGLVSLMRQRDDIA) constitute a propeptide that is removed on maturation. Disulfide bonds link C47–C86, C49–C77, and C67–C87.

Belongs to the sea anemone sodium channel inhibitory toxin family. Expressed both outside and in acontia, a specialised envenomation structure laden with batteries of venom-containing nematocysts found only in the superfamily Metridioidea.

Its subcellular location is the secreted. It is found in the nematocyst. Its function is as follows. In neuromuscular preparation of crustaceans, the toxin increased neurotransmitter release, causing repetitive firing of the axons. May affect sodium channels (Nav). This chain is Calitoxin, found in Calliactis polypus (Hermit crab anemone).